The sequence spans 224 residues: Non-structural protein V (224 aa).

Disordered stretches follow at residues 57–98 (IQYP…EPLF) and 144–172 (RTST…GHRR). Residues H170, C189, C193, C205, C207, C210, C214, and C217 each contribute to the Zn(2+) site.

Belongs to the paramyxoviruses V protein family. In terms of assembly, interacts with host IFIH1/MDA5 and DHX58/LGP2. Forms with host DDB1, CUL4A, STAT1, STAT2 and STAT3 the mumps virus V-dependent complex (VDC).

The protein localises to the virion. It is found in the host cytoplasm. In terms of biological role, plays an essential role in the inhibition of host immune response. Prevents the establishment of cellular antiviral state by blocking interferon-alpha/beta (IFN-alpha/beta) production and signaling pathway. Interacts with host IFIH1/MDA5 and DHX58/LGP2 to inhibit the transduction pathway involved in the activation of IFN-beta promoter, thus protecting the virus against cell antiviral state. Blocks the type I and II interferon signaling pathways by interacting with host STAT1, STAT2 and STAT3, and mediating their ubiquitination and subsequent proteasomal degradation. The protein is Non-structural protein V of Mumps virus genotype N (strain L-Zagreb vaccine) (MuV).